The chain runs to 548 residues: Esterase-5A (548 aa).

The first 19 residues, Met-1–Ala-19, serve as a signal peptide directing secretion. An intrachain disulfide couples Cys-87 to Cys-106. N-linked (GlcNAc...) asparagine glycosylation is found at Asn-95 and Asn-116. Ser-210 serves as the catalytic Acyl-ester intermediate. Cys-262 and Cys-274 are oxidised to a cystine. Residue Asn-479 is glycosylated (N-linked (GlcNAc...) asparagine). Cys-518 and Cys-539 are joined by a disulfide.

It belongs to the type-B carboxylesterase/lipase family.

The protein resides in the secreted. The catalysed reaction is a carboxylic ester + H2O = an alcohol + a carboxylate + H(+). The protein is Esterase-5A (Est-5A) of Drosophila persimilis (Fruit fly).